Consider the following 215-residue polypeptide: Glutathione S-transferase F10 (215 aa).

The region spanning 2-81 is the GST N-terminal domain; it reads VLTIYAPLFA…YIAEKYRSQG (80 aa). Glutathione contacts are provided by residues 11–12, 39–40, 52–53, and 65–66; these read AS, QR, KI, and ES. The GST C-terminal domain occupies 88 to 215; the sequence is TIEERGQVEQ…EVSAKYSLPV (128 aa).

This sequence belongs to the GST superfamily. Phi family. Interacts with BAK1. As to expression, expressed in roots, stems, floral buds, mature flowers and leaves.

It is found in the cytoplasm. It localises to the cytosol. It carries out the reaction RX + glutathione = an S-substituted glutathione + a halide anion + H(+). In vitro, possesses glutathione S-transferase activity toward 1-chloro-2,4-dinitrobenzene (CDNB) and benzyl isothiocyanate (BITC). May be involved in the conjugation of reduced glutathione to a wide number of exogenous and endogenous hydrophobic electrophiles and have a detoxification role against certain herbicides. This Arabidopsis thaliana (Mouse-ear cress) protein is Glutathione S-transferase F10.